Here is a 75-residue protein sequence, read N- to C-terminus: UPF0270 protein PSPPH_1506 (75 aa).

It belongs to the UPF0270 family.

The protein is UPF0270 protein PSPPH_1506 of Pseudomonas savastanoi pv. phaseolicola (strain 1448A / Race 6) (Pseudomonas syringae pv. phaseolicola (strain 1448A / Race 6)).